Here is a 269-residue protein sequence, read N- to C-terminus: 23S rRNA (adenosine(1067)-2'-O)-methyltransferase (269 aa).

S-adenosyl-L-methionine contacts are provided by arginine 135, arginine 165, leucine 195, glycine 218, isoleucine 238, and leucine 247.

It belongs to the class IV-like SAM-binding methyltransferase superfamily. RNA methyltransferase TsnR/AvirB family. Homodimer.

It catalyses the reaction adenosine(1067) in 23S rRNA + S-adenosyl-L-methionine = 2'-O-methyladenosine(1067) in 23S rRNA + S-adenosyl-L-homocysteine + H(+). Functionally, specifically methylates the adenosine-1067 in 23S ribosomal RNA. Confers resistance to antibiotic thiostrepton. This Streptomyces azureus protein is 23S rRNA (adenosine(1067)-2'-O)-methyltransferase (tsnR).